A 462-amino-acid chain; its full sequence is Cysteine--tRNA ligase (462 aa).

Cysteine 29 serves as a coordination point for Zn(2+). The 'HIGH' region motif lies at proline 31 to asparagine 41. 3 residues coordinate Zn(2+): cysteine 214, histidine 239, and glutamate 243. Positions lysine 272–serine 276 match the 'KMSKS' region motif. Residue lysine 275 coordinates ATP.

Belongs to the class-I aminoacyl-tRNA synthetase family. Monomer. Zn(2+) is required as a cofactor.

The protein localises to the cytoplasm. The enzyme catalyses tRNA(Cys) + L-cysteine + ATP = L-cysteinyl-tRNA(Cys) + AMP + diphosphate. The polypeptide is Cysteine--tRNA ligase (Xanthobacter autotrophicus (strain ATCC BAA-1158 / Py2)).